The following is a 739-amino-acid chain: Polyribonucleotide nucleotidyltransferase (739 aa).

Mg(2+)-binding residues include D488 and D494. A KH domain is found at 555 to 614 (PKIVTLKINPDKIRDVIGPGGKVINGIIDETGVKIDIDQDGTVFIASTDQDGINHARQLI). One can recognise an S1 motif domain in the interval 624 to 692 (GEEFDGTVRR…DKGRVNASHK (69 aa)). Residues 698–739 (GMSPEDRAAYDEKKKTERDSRPPRRDTGSRPPRDGQRPPRRN) are disordered. Over residues 701-739 (PEDRAAYDEKKKTERDSRPPRRDTGSRPPRDGQRPPRRN) the composition is skewed to basic and acidic residues.

This sequence belongs to the polyribonucleotide nucleotidyltransferase family. Requires Mg(2+) as cofactor.

The protein resides in the cytoplasm. It catalyses the reaction RNA(n+1) + phosphate = RNA(n) + a ribonucleoside 5'-diphosphate. Functionally, involved in mRNA degradation. Catalyzes the phosphorolysis of single-stranded polyribonucleotides processively in the 3'- to 5'-direction. This is Polyribonucleotide nucleotidyltransferase from Exiguobacterium sibiricum (strain DSM 17290 / CCUG 55495 / CIP 109462 / JCM 13490 / 255-15).